A 1059-amino-acid polypeptide reads, in one-letter code: Tyrosine-protein kinase-like otk (1059 aa).

The first 23 residues, 1-23 (MDMLMMWSICLFVCIFMAPFSCG), serve as a signal peptide directing secretion. Residues 24–597 (SGSSSRFIQV…GDGGFLATRA (574 aa)) lie on the Extracellular side of the membrane. Ig-like C2-type domains lie at 28–112 (SRFI…REAS), 113–202 (PTAK…RVMS), 258–377 (PEGL…LAIN), 380–475 (PGIL…VSIN), and 480–570 (PKFS…AVLT). The N-linked (GlcNAc...) asparagine glycan is linked to N42. Disulfide bonds link C49-C99, C141-C191, C283-C366, and C411-C459. N-linked (GlcNAc...) asparagine glycosylation is found at N348, N429, N441, N456, N469, N524, and N536. C502 and C554 are joined by a disulfide. A helical transmembrane segment spans residues 598–618 (VLITMTVALAYIVLVVGLMLW). Residues 619-1059 (CRYRRQARKA…ALSKAMQNSE (441 aa)) lie on the Cytoplasmic side of the membrane. The tract at residues 639–695 (GGEQAGGEGSTSGNPKASEQEPCLGKQQRNGRNGKSKSNGDPQKSDDTACSQQSRAS) is disordered. A compositionally biased stretch (polar residues) spans 665 to 693 (QQRNGRNGKSKSNGDPQKSDDTACSQQSR). S698 is subject to Phosphoserine. Residues 712-1055 (LSELIQIGRG…QLGAALSKAM (344 aa)) enclose the Protein kinase; inactive domain. Residues 739–781 (AQANDKDSDNDKQHSNSENGSGGSSGSTTLSTLNEKRRSKTSM) are disordered. Basic and acidic residues predominate over residues 742 to 753 (NDKDSDNDKQHS).

Belongs to the protein kinase superfamily. Tyr protein kinase family. Insulin receptor subfamily. As to quaternary structure, interacts with plexA; component of a receptor complex that mediates the repulsive signaling in response to Semaphorin ligands.

It localises to the cell membrane. Its function is as follows. Acts as a calcium-dependent, homophilic cell adhesion molecule that regulates neural recognition during the development of the nervous system. Component of the repulsive Plexin signaling response to regulate motor axon guidance at the embryonic stage. Also component of a receptor complex that is required in the adult visual system to innervate the lamina layer; specific targeting of R1-R6 axons. The chain is Tyrosine-protein kinase-like otk from Drosophila willistoni (Fruit fly).